The sequence spans 259 residues: Probable kinetochore protein spc25 (259 aa).

The segment covering 1–20 has biased composition (polar residues); sequence MSRKSVMSSTFEPSLSTSRQ. The disordered stretch occupies residues 1–25; the sequence is MSRKSVMSSTFEPSLSTSRQPLGPS. A coiled-coil region spans residues 59–162; it reads RKRVLEERNQ…HAAQLEAQAR (104 aa).

The protein belongs to the SPC25 family. In terms of assembly, component of the NDC80 complex, which consists of kpr-1/ndc80, kpr-2/nuf2, kpr-3/spc24 and kpr-4/spc25.

It is found in the nucleus. Its subcellular location is the chromosome. The protein resides in the centromere. The protein localises to the kinetochore. Functionally, acts as a component of the essential kinetochore-associated NDC80 complex, which is required for chromosome segregation and spindle checkpoint activity. The sequence is that of Probable kinetochore protein spc25 (kpr-4) from Neurospora crassa (strain ATCC 24698 / 74-OR23-1A / CBS 708.71 / DSM 1257 / FGSC 987).